A 276-amino-acid chain; its full sequence is Exosome complex component RRP43 (276 aa).

Residue alanine 2 is modified to N-acetylalanine.

This sequence belongs to the RNase PH family. In terms of assembly, component of the RNA exosome core complex (Exo-9), composed of EXOSC1, EXOSC2, EXOSC3, EXOSC4, EXOSC5, EXOSC6, EXOSC7, EXOSC8 and EXOSC9; within the complex interacts with EXOSC5 and EXOSC6. The catalytically inactive RNA exosome core complex (Exo-9) associates with the catalytic subunit EXOSC10/RRP6. Exo-9 may associate with DIS3 to form the nucleolar exosome complex, or DIS3L to form the cytoplasmic exosome complex. Exo-9 is formed by a hexameric base ring consisting of the heterodimers EXOSC4-EXOSC9, EXOSC5-EXOSC8 and EXOSC6-EXOSC7, and a cap ring consisting of EXOSC1, EXOSC2 and EXOSC3. The RNA exosome complex associates with cofactors C1D/RRP47, MPHOSPH6/MPP6 and MTREX/MTR4.

Its subcellular location is the cytoplasm. It is found in the nucleus. It localises to the nucleolus. Functionally, non-catalytic component of the RNA exosome complex which has 3'-&gt;5' exoribonuclease activity and participates in a multitude of cellular RNA processing and degradation events. In the nucleus, the RNA exosome complex is involved in proper maturation of stable RNA species such as rRNA, snRNA and snoRNA, in the elimination of RNA processing by-products and non-coding 'pervasive' transcripts, such as antisense RNA species and promoter-upstream transcripts (PROMPTs), and of mRNAs with processing defects, thereby limiting or excluding their export to the cytoplasm. The RNA exosome may be involved in Ig class switch recombination (CSR) and/or Ig variable region somatic hypermutation (SHM) by targeting AICDA deamination activity to transcribed dsDNA substrates. In the cytoplasm, the RNA exosome complex is involved in general mRNA turnover and specifically degrades inherently unstable mRNAs containing AU-rich elements (AREs) within their 3' untranslated regions, and in RNA surveillance pathways, preventing translation of aberrant mRNAs. It seems to be involved in degradation of histone mRNA. The catalytic inactive RNA exosome core complex of 9 subunits (Exo-9) is proposed to play a pivotal role in the binding and presentation of RNA for ribonucleolysis, and to serve as a scaffold for the association with catalytic subunits and accessory proteins or complexes. EXOSC8 binds to ARE-containing RNAs. The chain is Exosome complex component RRP43 (Exosc8) from Mus musculus (Mouse).